We begin with the raw amino-acid sequence, 240 residues long: Putative S-adenosylmethionine-dependent methyltransferase RcsF (240 aa).

Positions 5 to 142 (ISPIGHVRSC…YVPYADIVPD (138 aa)) constitute a TsaA-like domain. S-adenosyl-L-methionine contacts are provided by residues 22 to 24 (PRQ), 63 to 64 (HQ), arginine 91, and 122 to 125 (LDGT).

It belongs to the tRNA methyltransferase O family.

The polypeptide is Putative S-adenosylmethionine-dependent methyltransferase RcsF (rcsF) (Pseudomonas aeruginosa).